The chain runs to 609 residues: Chaperone protein DnaK (609 aa).

Phosphothreonine; by autocatalysis is present on T173. Basic and acidic residues predominate over residues 525 to 542 (ENISDEDKKNAEEKKDAL). Disordered regions lie at residues 525-554 (ENIS…IDDI) and 574-609 (EQAQ…EDKK). Positions 574–587 (EQAQQAQQQGQEEQ) are enriched in low complexity. The segment covering 597-609 (ADFKEVKDDEDKK) has biased composition (basic and acidic residues).

Belongs to the heat shock protein 70 family.

In terms of biological role, acts as a chaperone. This is Chaperone protein DnaK from Staphylococcus epidermidis (strain ATCC 35984 / DSM 28319 / BCRC 17069 / CCUG 31568 / BM 3577 / RP62A).